The following is a 355-amino-acid chain: Myosin-binding protein H-like (355 aa).

Polar residues-rich tracts occupy residues 1-16 and 31-41; these read META…SQRQ and TSHQQEAGSPS. The disordered stretch occupies residues 1–41; the sequence is METATTLEIASCSQRQVEAAADPADAKGPRTSHQQEAGSPS. Position 39 is a phosphoserine (Ser39). Residues 46-140 form the Ig-like C2-type 1 domain; it reads PSIEEHPKIW…GGLQATATIN (95 aa). In terms of domain architecture, Fibronectin type-III spans 149-244; sequence PPQSIKLVDV…TADLAHIQKA (96 aa). The Ig-like C2-type 2 domain maps to 262–346; it reads PKFTQPLADC…INALGEASVD (85 aa). An intrachain disulfide couples Cys283 to Cys334. Omega-N-methylarginine is present on Arg322.

The protein belongs to the immunoglobulin superfamily. MyBP family. As to expression, expressed in the atria as well as in discrete puncta throughout the right ventricular wall and septum.

Its subcellular location is the cytoplasm. It is found in the myofibril. The protein localises to the sarcomere. Its function is as follows. Myosin-binding protein which plays a role in cardiac function. Seems to regulate conduction in the atria and ventricular conduction systems. The protein is Myosin-binding protein H-like of Mus musculus (Mouse).